Consider the following 301-residue polypeptide: Probable alpha-L-glutamate ligase (301 aa).

Residues 104-287 (LQLLSRRGIG…VAGMIIEYLE (184 aa)) form the ATP-grasp domain. ATP contacts are provided by residues Lys141, 178–179 (EY), Asp187, and 211–213 (RSN). Positions 248, 260, and 262 each coordinate Mg(2+). The Mn(2+) site is built by Asp248, Glu260, and Asn262.

Belongs to the RimK family. It depends on Mg(2+) as a cofactor. Mn(2+) is required as a cofactor.

This is Probable alpha-L-glutamate ligase from Pseudomonas savastanoi pv. phaseolicola (strain 1448A / Race 6) (Pseudomonas syringae pv. phaseolicola (strain 1448A / Race 6)).